We begin with the raw amino-acid sequence, 89 residues long: Small ribosomal subunit protein uS15 (89 aa).

Belongs to the universal ribosomal protein uS15 family. As to quaternary structure, part of the 30S ribosomal subunit. Forms a bridge to the 50S subunit in the 70S ribosome, contacting the 23S rRNA.

Its function is as follows. One of the primary rRNA binding proteins, it binds directly to 16S rRNA where it helps nucleate assembly of the platform of the 30S subunit by binding and bridging several RNA helices of the 16S rRNA. In terms of biological role, forms an intersubunit bridge (bridge B4) with the 23S rRNA of the 50S subunit in the ribosome. The protein is Small ribosomal subunit protein uS15 of Prochlorococcus marinus (strain MIT 9515).